A 148-amino-acid polypeptide reads, in one-letter code: MIKEELNLWAEGVEFRHWDAYYNFILSVLNFLCIKEYELSVILCNNEYIQKLNGEFRQKPEPTDVLSFNYFEGSEQINHKIQGDIIISLEYLEFSSLEFNVEMYEELQRNTIHGILHLIGYTHDTNDFQNETMLIIQERVLRETRRVF.

Zn(2+)-binding residues include histidine 113, histidine 117, and histidine 123.

This sequence belongs to the endoribonuclease YbeY family. The cofactor is Zn(2+).

Its subcellular location is the cytoplasm. Functionally, single strand-specific metallo-endoribonuclease involved in late-stage 70S ribosome quality control and in maturation of the 3' terminus of the 16S rRNA. In Borrelia duttonii (strain Ly), this protein is Endoribonuclease YbeY.